The chain runs to 800 residues: Putative antiporter subunit mnhA2 (800 aa).

The next 20 helical transmembrane spans lie at 1–21 (MSLV…LLMS), 33–53 (IALV…PSVA), 78–98 (GLSL…FFYA), 118–138 (LFMF…MYIF), 167–187 (FMIT…LYIM), 207–227 (GLFI…SAQF), 241–261 (TPVS…FLLL), 273–293 (YIYI…ITAL), 300–320 (GILA…VGIG), 331–351 (IASI…NHAI), 387–407 (LVMT…GFLS), 424–444 (FSLI…IFTF), 472–492 (PWLF…IFFV), 527–547 (GFNI…VLAI), 595–615 (IIMT…RIGL), 627–647 (GALE…LIFI), 651–671 (LTMV…FIAM), 676–696 (LALT…VSFS), 712–732 (IIKI…IFIT), and 768–788 (LDTL…YTLL).

It belongs to the CPA3 antiporters (TC 2.A.63) subunit A family. May form a heterooligomeric complex that consists of seven subunits: mnhA2, mnhB2, mnhC2, mnhD2, mnhE2, mnhF2 and mnhG2.

It localises to the cell membrane. The chain is Putative antiporter subunit mnhA2 (mnhA2) from Staphylococcus aureus (strain Mu3 / ATCC 700698).